Here is a 235-residue protein sequence, read N- to C-terminus: Phosphoribosylaminoimidazole-succinocarboxamide synthase (235 aa).

Belongs to the SAICAR synthetase family.

The enzyme catalyses 5-amino-1-(5-phospho-D-ribosyl)imidazole-4-carboxylate + L-aspartate + ATP = (2S)-2-[5-amino-1-(5-phospho-beta-D-ribosyl)imidazole-4-carboxamido]succinate + ADP + phosphate + 2 H(+). Its pathway is purine metabolism; IMP biosynthesis via de novo pathway; 5-amino-1-(5-phospho-D-ribosyl)imidazole-4-carboxamide from 5-amino-1-(5-phospho-D-ribosyl)imidazole-4-carboxylate: step 1/2. This is Phosphoribosylaminoimidazole-succinocarboxamide synthase (purC) from Streptococcus pneumoniae serotype 4 (strain ATCC BAA-334 / TIGR4).